A 129-amino-acid chain; its full sequence is uncharacterized protein (129 aa).

This sequence to M.pneumoniae MPN_376 N-terminal region.

This is an uncharacterized protein from Mycoplasma pneumoniae (strain ATCC 29342 / M129 / Subtype 1) (Mycoplasmoides pneumoniae).